The chain runs to 413 residues: Eukaryotic initiation factor 4A-10 (413 aa).

A Q motif motif is present at residues Asp40–Gln68. A Helicase ATP-binding domain is found at Ile71–Ile241. An ATP-binding site is contributed by Ala84 to Thr91. The DEAD box motif lies at Asp189–Asp192. Positions Gly252–Leu413 constitute a Helicase C-terminal domain.

Belongs to the DEAD box helicase family. eIF4A subfamily. In terms of assembly, eIF4F is a multi-subunit complex, the composition of which varies with external and internal environmental conditions. It is composed of at least EIF4A, EIF4E and EIF4G.

It catalyses the reaction ATP + H2O = ADP + phosphate + H(+). ATP-dependent RNA helicase which is a subunit of the eIF4F complex involved in cap recognition and is required for mRNA binding to ribosome. In the current model of translation initiation, eIF4A unwinds RNA secondary structures in the 5'-UTR of mRNAs which is necessary to allow efficient binding of the small ribosomal subunit, and subsequent scanning for the initiator codon. This chain is Eukaryotic initiation factor 4A-10, found in Nicotiana tabacum (Common tobacco).